The following is a 397-amino-acid chain: Enoyl-[acyl-carrier-protein] reductase [NADH] (397 aa).

NAD(+) contacts are provided by residues 48–53 (GASTGY), 74–75 (FE), 111–112 (DA), and 139–140 (AA). Tyr-225 lines the substrate pocket. Tyr-235 functions as the Proton donor in the catalytic mechanism. NAD(+)-binding positions include Lys-244 and 273 to 275 (VVT).

The protein belongs to the TER reductase family. Monomer.

It catalyses the reaction a 2,3-saturated acyl-[ACP] + NAD(+) = a (2E)-enoyl-[ACP] + NADH + H(+). It functions in the pathway lipid metabolism; fatty acid biosynthesis. Its function is as follows. Involved in the final reduction of the elongation cycle of fatty acid synthesis (FAS II). Catalyzes the reduction of a carbon-carbon double bond in an enoyl moiety that is covalently linked to an acyl carrier protein (ACP). The sequence is that of Enoyl-[acyl-carrier-protein] reductase [NADH] from Burkholderia pseudomallei (strain 1710b).